The chain runs to 335 residues: Histidinol-phosphate aminotransferase (335 aa).

Lysine 202 carries the post-translational modification N6-(pyridoxal phosphate)lysine.

Belongs to the class-II pyridoxal-phosphate-dependent aminotransferase family. Histidinol-phosphate aminotransferase subfamily. As to quaternary structure, homodimer. Requires pyridoxal 5'-phosphate as cofactor.

It catalyses the reaction L-histidinol phosphate + 2-oxoglutarate = 3-(imidazol-4-yl)-2-oxopropyl phosphate + L-glutamate. The protein operates within amino-acid biosynthesis; L-histidine biosynthesis; L-histidine from 5-phospho-alpha-D-ribose 1-diphosphate: step 7/9. This is Histidinol-phosphate aminotransferase from Thermotoga maritima (strain ATCC 43589 / DSM 3109 / JCM 10099 / NBRC 100826 / MSB8).